The primary structure comprises 158 residues: Probable transcription regulator ArfM (158 aa).

Activates, in anaerobic conditions, the transcription of the fermentative operons lctEP and alsDS, of the hmp gene encoding a flavohemoglobin-like protein, the nitrite reductase operon nasDE and the heme biosynthesis genes hemN and hemZ. The chain is Probable transcription regulator ArfM (arfM) from Bacillus subtilis (strain 168).